The sequence spans 122 residues: Small ribosomal subunit protein uS13 (122 aa).

Residues 99–122 (RGQRTHTNARTRKGPAKAIAGKKK) form a disordered region.

Belongs to the universal ribosomal protein uS13 family. In terms of assembly, part of the 30S ribosomal subunit. Forms a loose heterodimer with protein S19. Forms two bridges to the 50S subunit in the 70S ribosome.

Functionally, located at the top of the head of the 30S subunit, it contacts several helices of the 16S rRNA. In the 70S ribosome it contacts the 23S rRNA (bridge B1a) and protein L5 of the 50S subunit (bridge B1b), connecting the 2 subunits; these bridges are implicated in subunit movement. Contacts the tRNAs in the A and P-sites. The chain is Small ribosomal subunit protein uS13 from Rhodopseudomonas palustris (strain BisA53).